The following is a 371-amino-acid chain: Queuine tRNA-ribosyltransferase (371 aa).

Residue Asp-89 is the Proton acceptor of the active site. Substrate contacts are provided by residues 89 to 93 (DSGGF), Asp-143, Gln-185, and Gly-212. Residues 243 to 249 (GVGKPED) are RNA binding. The Nucleophile role is filled by Asp-262. The interval 267–271 (TRNAR) is RNA binding; important for wobble base 34 recognition. Zn(2+) is bound by residues Cys-300, Cys-302, Cys-305, and His-331.

Belongs to the queuine tRNA-ribosyltransferase family. Homodimer. Within each dimer, one monomer is responsible for RNA recognition and catalysis, while the other monomer binds to the replacement base PreQ1. The cofactor is Zn(2+).

The enzyme catalyses 7-aminomethyl-7-carbaguanine + guanosine(34) in tRNA = 7-aminomethyl-7-carbaguanosine(34) in tRNA + guanine. It functions in the pathway tRNA modification; tRNA-queuosine biosynthesis. In terms of biological role, catalyzes the base-exchange of a guanine (G) residue with the queuine precursor 7-aminomethyl-7-deazaguanine (PreQ1) at position 34 (anticodon wobble position) in tRNAs with GU(N) anticodons (tRNA-Asp, -Asn, -His and -Tyr). Catalysis occurs through a double-displacement mechanism. The nucleophile active site attacks the C1' of nucleotide 34 to detach the guanine base from the RNA, forming a covalent enzyme-RNA intermediate. The proton acceptor active site deprotonates the incoming PreQ1, allowing a nucleophilic attack on the C1' of the ribose to form the product. After dissociation, two additional enzymatic reactions on the tRNA convert PreQ1 to queuine (Q), resulting in the hypermodified nucleoside queuosine (7-(((4,5-cis-dihydroxy-2-cyclopenten-1-yl)amino)methyl)-7-deazaguanosine). The polypeptide is Queuine tRNA-ribosyltransferase (Pseudomonas syringae pv. tomato (strain ATCC BAA-871 / DC3000)).